A 250-amino-acid chain; its full sequence is 1-(5-phosphoribosyl)-5-[(5-phosphoribosylamino)methylideneamino] imidazole-4-carboxamide isomerase (250 aa).

The Proton acceptor role is filled by D8. The active-site Proton donor is the D129.

The protein belongs to the HisA/HisF family.

It localises to the cytoplasm. It catalyses the reaction 1-(5-phospho-beta-D-ribosyl)-5-[(5-phospho-beta-D-ribosylamino)methylideneamino]imidazole-4-carboxamide = 5-[(5-phospho-1-deoxy-D-ribulos-1-ylimino)methylamino]-1-(5-phospho-beta-D-ribosyl)imidazole-4-carboxamide. The protein operates within amino-acid biosynthesis; L-histidine biosynthesis; L-histidine from 5-phospho-alpha-D-ribose 1-diphosphate: step 4/9. This is 1-(5-phosphoribosyl)-5-[(5-phosphoribosylamino)methylideneamino] imidazole-4-carboxamide isomerase from Desulfatibacillum aliphaticivorans.